Consider the following 305-residue polypeptide: Porphobilinogen deaminase (305 aa).

Cys-238 carries the post-translational modification S-(dipyrrolylmethanemethyl)cysteine.

The protein belongs to the HMBS family. Monomer. The cofactor is dipyrromethane.

The catalysed reaction is 4 porphobilinogen + H2O = hydroxymethylbilane + 4 NH4(+). It participates in porphyrin-containing compound metabolism; protoporphyrin-IX biosynthesis; coproporphyrinogen-III from 5-aminolevulinate: step 2/4. Its function is as follows. Tetrapolymerization of the monopyrrole PBG into the hydroxymethylbilane pre-uroporphyrinogen in several discrete steps. This is Porphobilinogen deaminase from Rubrobacter xylanophilus (strain DSM 9941 / JCM 11954 / NBRC 16129 / PRD-1).